Reading from the N-terminus, the 142-residue chain is ATP synthase epsilon chain (142 aa).

Belongs to the ATPase epsilon chain family. As to quaternary structure, F-type ATPases have 2 components, CF(1) - the catalytic core - and CF(0) - the membrane proton channel. CF(1) has five subunits: alpha(3), beta(3), gamma(1), delta(1), epsilon(1). CF(0) has three main subunits: a, b and c.

Its subcellular location is the cell membrane. Functionally, produces ATP from ADP in the presence of a proton gradient across the membrane. The polypeptide is ATP synthase epsilon chain (Lactiplantibacillus plantarum (strain ATCC BAA-793 / NCIMB 8826 / WCFS1) (Lactobacillus plantarum)).